Here is a 218-residue protein sequence, read N- to C-terminus: Pyridoxine/pyridoxamine 5'-phosphate oxidase (218 aa).

Residues 14–17 (RREY) and K72 each bind substrate. FMN is bound by residues 67–72 (RIVLLK), 82–83 (YT), R88, K89, and Q111. 3 residues coordinate substrate: Y129, R133, and S137. FMN is bound by residues 146–147 (QS) and W191. 197 to 199 (RLH) lines the substrate pocket. R201 contacts FMN.

Belongs to the pyridoxamine 5'-phosphate oxidase family. Homodimer. FMN serves as cofactor.

The enzyme catalyses pyridoxamine 5'-phosphate + O2 + H2O = pyridoxal 5'-phosphate + H2O2 + NH4(+). It catalyses the reaction pyridoxine 5'-phosphate + O2 = pyridoxal 5'-phosphate + H2O2. Its pathway is cofactor metabolism; pyridoxal 5'-phosphate salvage; pyridoxal 5'-phosphate from pyridoxamine 5'-phosphate: step 1/1. It functions in the pathway cofactor metabolism; pyridoxal 5'-phosphate salvage; pyridoxal 5'-phosphate from pyridoxine 5'-phosphate: step 1/1. Catalyzes the oxidation of either pyridoxine 5'-phosphate (PNP) or pyridoxamine 5'-phosphate (PMP) into pyridoxal 5'-phosphate (PLP). The protein is Pyridoxine/pyridoxamine 5'-phosphate oxidase of Klebsiella pneumoniae subsp. pneumoniae (strain ATCC 700721 / MGH 78578).